The sequence spans 497 residues: NADH-ubiquinone oxidoreductase chain 4 (497 aa).

14 consecutive transmembrane segments (helical) span residues 3-23 (FLLY…LLII), 42-62 (LFFS…SDNI), 94-114 (ISLL…LISW), 122-142 (NSFI…FCVL), 144-164 (LVFF…LIGV), 178-198 (LFFY…VIYS), 220-240 (ILWA…PFHI), 250-270 (PTVG…YGLL), 276-296 (IFCD…LLGI), 313-333 (IAYA…TSNI), 340-360 (VFLM…IGCV), 374-394 (GLVS…LSNI), 418-438 (FAAL…IWLY), and 463-483 (VVGF…SYII).

This sequence belongs to the complex I subunit 4 family.

It is found in the mitochondrion membrane. The catalysed reaction is a ubiquinone + NADH + 5 H(+)(in) = a ubiquinol + NAD(+) + 4 H(+)(out). In terms of biological role, core subunit of the mitochondrial membrane respiratory chain NADH dehydrogenase (Complex I) that is believed to belong to the minimal assembly required for catalysis. Complex I functions in the transfer of electrons from NADH to the respiratory chain. The immediate electron acceptor for the enzyme is believed to be ubiquinone. The polypeptide is NADH-ubiquinone oxidoreductase chain 4 (ND4) (Acanthamoeba castellanii (Amoeba)).